A 477-amino-acid chain; its full sequence is Ribulose bisphosphate carboxylase large chain (477 aa).

The propeptide occupies 1–2 (MS). The residue at position 3 (Pro-3) is an N-acetylproline. Lys-14 is subject to N6,N6,N6-trimethyllysine. The substrate site is built by Asn-123 and Thr-173. Lys-175 functions as the Proton acceptor in the catalytic mechanism. A substrate-binding site is contributed by Lys-177. Lys-201, Asp-203, and Glu-204 together coordinate Mg(2+). Lys-201 carries the post-translational modification N6-carboxylysine. His-294 functions as the Proton acceptor in the catalytic mechanism. Residues Arg-295, His-327, and Ser-379 each contribute to the substrate site.

Belongs to the RuBisCO large chain family. Type I subfamily. In terms of assembly, heterohexadecamer of 8 large chains and 8 small chains; disulfide-linked. The disulfide link is formed within the large subunit homodimers. The cofactor is Mg(2+). The disulfide bond which can form in the large chain dimeric partners within the hexadecamer appears to be associated with oxidative stress and protein turnover.

It is found in the plastid. It localises to the chloroplast. It catalyses the reaction 2 (2R)-3-phosphoglycerate + 2 H(+) = D-ribulose 1,5-bisphosphate + CO2 + H2O. The enzyme catalyses D-ribulose 1,5-bisphosphate + O2 = 2-phosphoglycolate + (2R)-3-phosphoglycerate + 2 H(+). Functionally, ruBisCO catalyzes two reactions: the carboxylation of D-ribulose 1,5-bisphosphate, the primary event in carbon dioxide fixation, as well as the oxidative fragmentation of the pentose substrate in the photorespiration process. Both reactions occur simultaneously and in competition at the same active site. In Nicotiana sylvestris (Wood tobacco), this protein is Ribulose bisphosphate carboxylase large chain.